We begin with the raw amino-acid sequence, 198 residues long: Glycerol-3-phosphate acyltransferase (198 aa).

The next 5 helical transmembrane spans lie at 5–25, 56–76, 84–104, 114–134, and 158–178; these read LILLSLLAYVIGSIPSGLWIG, SIVTVMDILKGTVATLLPFFF, FWLLTGAFAIIGHSFPLFAGF, AGVILAYAPLLFVAALIIFLL, and LFMGDWILIILIACITLFVVW.

This sequence belongs to the PlsY family. As to quaternary structure, probably interacts with PlsX.

It localises to the cell membrane. The catalysed reaction is an acyl phosphate + sn-glycerol 3-phosphate = a 1-acyl-sn-glycero-3-phosphate + phosphate. Its pathway is lipid metabolism; phospholipid metabolism. Its function is as follows. Catalyzes the transfer of an acyl group from acyl-phosphate (acyl-PO(4)) to glycerol-3-phosphate (G3P) to form lysophosphatidic acid (LPA). This enzyme utilizes acyl-phosphate as fatty acyl donor, but not acyl-CoA or acyl-ACP. The sequence is that of Glycerol-3-phosphate acyltransferase from Listeria welshimeri serovar 6b (strain ATCC 35897 / DSM 20650 / CCUG 15529 / CIP 8149 / NCTC 11857 / SLCC 5334 / V8).